The following is a 202-amino-acid chain: Adapter protein MecA 2 (202 aa).

This sequence belongs to the MecA family. Homodimer.

Functionally, enables the recognition and targeting of unfolded and aggregated proteins to the ClpC protease or to other proteins involved in proteolysis. Acts negatively in the development of competence by binding ComK and recruiting it to the ClpCP protease. When overexpressed, inhibits sporulation. Also involved in Spx degradation by ClpC. This Bacillus anthracis protein is Adapter protein MecA 2 (mecA2).